The following is a 434-amino-acid chain: UDP-N-acetylmuramoyl-L-alanyl-D-glutamate--2,6-diaminopimelate ligase (434 aa).

Serine 17 contributes to the UDP-N-acetyl-alpha-D-muramoyl-L-alanyl-D-glutamate binding site. 68–74 (GTNGKTT) is a binding site for ATP. Residues 111 to 112 (TT), serine 138, glutamine 144, and arginine 146 contribute to the UDP-N-acetyl-alpha-D-muramoyl-L-alanyl-D-glutamate site. At lysine 178 the chain carries N6-carboxylysine. Meso-2,6-diaminopimelate contacts are provided by residues arginine 326, 350-353 (DNPR), glycine 401, and glutamate 405. The short motif at 350–353 (DNPR) is the Meso-diaminopimelate recognition motif element.

It belongs to the MurCDEF family. MurE subfamily. Mg(2+) is required as a cofactor. Carboxylation is probably crucial for Mg(2+) binding and, consequently, for the gamma-phosphate positioning of ATP.

It is found in the cytoplasm. It carries out the reaction UDP-N-acetyl-alpha-D-muramoyl-L-alanyl-D-glutamate + meso-2,6-diaminopimelate + ATP = UDP-N-acetyl-alpha-D-muramoyl-L-alanyl-gamma-D-glutamyl-meso-2,6-diaminopimelate + ADP + phosphate + H(+). The protein operates within cell wall biogenesis; peptidoglycan biosynthesis. Functionally, catalyzes the addition of meso-diaminopimelic acid to the nucleotide precursor UDP-N-acetylmuramoyl-L-alanyl-D-glutamate (UMAG) in the biosynthesis of bacterial cell-wall peptidoglycan. The protein is UDP-N-acetylmuramoyl-L-alanyl-D-glutamate--2,6-diaminopimelate ligase of Wolinella succinogenes (strain ATCC 29543 / DSM 1740 / CCUG 13145 / JCM 31913 / LMG 7466 / NCTC 11488 / FDC 602W) (Vibrio succinogenes).